Reading from the N-terminus, the 285-residue chain is MLYLTKIRNAESEFTGNEQKIADFLRANVSELKSVSSRKMAKQLGISQSSIVKFAQKLGAQGFTELRMALIGEYSASREKTNATALHLHSSITSDDSLEVIARKLNREKELALEQTCALFDYARLQKIIEVISKAPFIQITGLGGSALVGRDLSFKLMKIGYRVACEADTHVQATVSQALKKGDVQIAISYSGSKKEIVLCAEAARKQGATVIAITSLADSPLRRLAHFTLDTVSGETEWRSSSMSTRTAQNSVTDLLFVGLVQLNDVESLKMIQRSSELTQRLK.

The HTH rpiR-type domain occupies 1-77 (MLYLTKIRNA…MALIGEYSAS (77 aa)). The H-T-H motif DNA-binding region spans 37–56 (SRKMAKQLGISQSSIVKFAQ). An SIS domain is found at 128-268 (IIEVISKAPF…FVGLVQLNDV (141 aa)).

As to quaternary structure, homotetramer.

The protein operates within amino-sugar metabolism; N-acetylmuramate degradation [regulation]. In terms of biological role, represses the expression of the murPQ operon involved in the uptake and degradation of N-acetylmuramic acid (MurNAc). Binds to two adjacent inverted repeats within the operator region. MurNAc 6-phosphate, the substrate of MurQ, is the specific inducer that weakens binding of MurR to the operator. In Escherichia coli O9:H4 (strain HS), this protein is HTH-type transcriptional regulator MurR.